A 306-amino-acid chain; its full sequence is MASSCSRRLLAAALLPWCCAAWALGHLDPPSPPPLVIWHGMGDSCCNPMSMGVIKKMVEKEIPGIYVLSLEIGKNMMEDVENSFFLNVNVQVNMVCQILEKDPKLQQGYNAIGFSQGGQFLRAVAQRCPTPPMMTLISVGGQHQGVFGLPRCPGESSHICDFIRKSLNAGAYSKLVQERLVQAQYWHDPIKESVYRNYSIFLADINQERCVNESYKKNLMALKKFVMVKFFNDSIVDPVDSEWFGFYRSGQAKETIPLQESTLYTEDRLGLKKMDKAGKLVFLAKEGDHLQISKEWFTAHIIPFLK.

The signal sequence occupies residues 1-27 (MASSCSRRLLAAALLPWCCAAWALGHL). Disulfide bonds link C45/C46, C96/C128, and C152/C160. S115 is an active-site residue. Residues N197, N212, and N232 are each glycosylated (N-linked (GlcNAc...) asparagine). Residues D233 and H289 contribute to the active site.

It belongs to the palmitoyl-protein thioesterase family. As to quaternary structure, interacts with CLN5, ATP5F1A and ATP5F1B. In terms of processing, glycosylated. In terms of tissue distribution, highest level in testis and kidney, lower in heart, brain and lung and lowest in skeletal muscle.

It localises to the lysosome. The protein resides in the secreted. Its subcellular location is the golgi apparatus. The protein localises to the endoplasmic reticulum. The catalysed reaction is S-hexadecanoyl-L-cysteinyl-[protein] + H2O = L-cysteinyl-[protein] + hexadecanoate + H(+). It carries out the reaction hexadecanoyl-CoA + H2O = hexadecanoate + CoA + H(+). The enzyme catalyses S-hexadecanoyl-N-acetylcysteamine + H2O = N-acetylcysteamine + hexadecanoate + H(+). It catalyses the reaction S-hexadecanoyl-N-acetylcysteine methyl ester + H2O = N-acetylcysteine methyl ester + hexadecanoate + H(+). Has thioesterase activity against fatty acid thioesters with 14 -18 carbons, including palmitoyl-CoA, S-palmitoyl-N-acetylcysteamine, and palmitoylated proteins. In contrast to PPT2, PPT1 can hydrolyze palmitoylated proteins and palmitoylcysteine. The chain is Palmitoyl-protein thioesterase 1 (Ppt1) from Mus musculus (Mouse).